A 257-amino-acid chain; its full sequence is 5-keto-4-deoxy-D-glucarate aldolase (257 aa).

Histidine 51 serves as the catalytic Proton acceptor. Residue glutamine 152 participates in substrate binding. Glutamate 154 lines the Mg(2+) pocket. Serine 179 and aspartate 180 together coordinate substrate. Aspartate 180 is a binding site for Mg(2+).

The protein belongs to the HpcH/HpaI aldolase family. KDGluc aldolase subfamily. As to quaternary structure, homohexamer; trimer of dimers. Requires Mg(2+) as cofactor.

It catalyses the reaction 5-dehydro-4-deoxy-D-glucarate = 2-hydroxy-3-oxopropanoate + pyruvate. The catalysed reaction is 2-dehydro-3-deoxy-D-glucarate = 2-hydroxy-3-oxopropanoate + pyruvate. It functions in the pathway carbohydrate acid metabolism; galactarate degradation; D-glycerate from galactarate: step 2/3. Catalyzes the reversible retro-aldol cleavage of both 5-keto-4-deoxy-D-glucarate and 2-keto-3-deoxy-D-glucarate to pyruvate and tartronic semialdehyde. In Shigella boydii serotype 18 (strain CDC 3083-94 / BS512), this protein is 5-keto-4-deoxy-D-glucarate aldolase.